We begin with the raw amino-acid sequence, 238 residues long: MKIDILTLFPEMFAPLESSIVGKAVEKGLLDIRYHNFRDNAEKARHVDDEPYGGGQGMLLRAQPIYDTIDKIDANNPRVILLDPAGKTFNQSYAEELAQEDELIFICGHYEGYDERIKQLVTDEISLGDFVLTGGELAAMTMVDATVRLIPNVIGKEASHQDDSFSSGLLEYPQYTRPYDFRGMTVPDVLMSGHHENIRRWRLEESLRKTYLRRPDLLEKYPLNQEESDLLAKIKEEM.

S-adenosyl-L-methionine is bound by residues G108 and 127–132 (LGDFVL).

Belongs to the RNA methyltransferase TrmD family. Homodimer.

The protein localises to the cytoplasm. It catalyses the reaction guanosine(37) in tRNA + S-adenosyl-L-methionine = N(1)-methylguanosine(37) in tRNA + S-adenosyl-L-homocysteine + H(+). Functionally, specifically methylates guanosine-37 in various tRNAs. In Streptococcus uberis (strain ATCC BAA-854 / 0140J), this protein is tRNA (guanine-N(1)-)-methyltransferase.